A 478-amino-acid chain; its full sequence is NAD-dependent malic enzyme (478 aa).

An ACT domain is found at 12–86 (TIRLQFEKDI…GVKIVNVSDR (75 aa)). The active-site Proton donor is tyrosine 114. The Proton acceptor role is filled by lysine 169. The a divalent metal cation site is built by glutamate 211, aspartate 212, and aspartate 237. Residues 270 to 273 (IGAA), asparagine 363, and asparagine 393 contribute to the NAD(+) site.

Belongs to the malic enzymes family. Homotetramer. Mg(2+) is required as a cofactor. The cofactor is Mn(2+).

It catalyses the reaction (S)-malate + NAD(+) = pyruvate + CO2 + NADH. The catalysed reaction is oxaloacetate + H(+) = pyruvate + CO2. Its activity is regulated as follows. The activity is enhanced 5-7 times by ammonium and potassium. Functionally, in addition to the NAD-dependent oxidative decarboxylation of L-malate, the enzyme catalyzes the decarboxylation of oxaloacetate. The sequence is that of NAD-dependent malic enzyme from Geobacillus stearothermophilus (Bacillus stearothermophilus).